A 331-amino-acid chain; its full sequence is Biotin synthase (331 aa).

The Radical SAM core domain occupies 48-278; that stretch reads FDSQKFEFCS…SAELRLCGGR (231 aa). [4Fe-4S] cluster-binding residues include C66, C70, and C73. Residues C110, C143, C203, and R273 each coordinate [2Fe-2S] cluster.

The protein belongs to the radical SAM superfamily. Biotin synthase family. Homodimer. [4Fe-4S] cluster is required as a cofactor. [2Fe-2S] cluster serves as cofactor.

It carries out the reaction (4R,5S)-dethiobiotin + (sulfur carrier)-SH + 2 reduced [2Fe-2S]-[ferredoxin] + 2 S-adenosyl-L-methionine = (sulfur carrier)-H + biotin + 2 5'-deoxyadenosine + 2 L-methionine + 2 oxidized [2Fe-2S]-[ferredoxin]. It functions in the pathway cofactor biosynthesis; biotin biosynthesis; biotin from 7,8-diaminononanoate: step 2/2. In terms of biological role, catalyzes the conversion of dethiobiotin (DTB) to biotin by the insertion of a sulfur atom into dethiobiotin via a radical-based mechanism. This is Biotin synthase from Hydrogenobaculum sp. (strain Y04AAS1).